The following is a 269-amino-acid chain: MTFSFHKMHGLGNDFIVLDARKNPIQMNPALAQALSNRHTGIGCDQLIIIGNGKNQADVSMEIWNADGSEVEACGNATRCVPVFLGRDVIISTAAGLLDARLSDEGACVDMGRPRLSWDEIPLAYAMDTLSMPVAWEDLKEPTAVNMGNPHVVFVVDDVDAVDFGRLGNMIEHDQLFPERINVNIVMVTGKDHLKMRTWERGAGLTRACGTGACATFVAAKRRRLVSGKTQIDLPGGRLVLDENSEGHIIMRGPATYVFKGEADWASFS.

Residues Asn-13, Gln-46, and Asn-65 each coordinate substrate. Cys-74 serves as the catalytic Proton donor. Substrate contacts are provided by residues Gly-75 to Asn-76, Asn-149, Asn-182, and Glu-200 to Arg-201. Cys-209 acts as the Proton acceptor in catalysis. A substrate-binding site is contributed by Gly-210–Thr-211.

Belongs to the diaminopimelate epimerase family. Homodimer.

The protein localises to the cytoplasm. The catalysed reaction is (2S,6S)-2,6-diaminopimelate = meso-2,6-diaminopimelate. It participates in amino-acid biosynthesis; L-lysine biosynthesis via DAP pathway; DL-2,6-diaminopimelate from LL-2,6-diaminopimelate: step 1/1. Functionally, catalyzes the stereoinversion of LL-2,6-diaminopimelate (L,L-DAP) to meso-diaminopimelate (meso-DAP), a precursor of L-lysine and an essential component of the bacterial peptidoglycan. In Zymomonas mobilis subsp. mobilis (strain ATCC 31821 / ZM4 / CP4), this protein is Diaminopimelate epimerase.